The following is a 252-amino-acid chain: Aspartate/glutamate leucyltransferase (252 aa).

Belongs to the R-transferase family. Bpt subfamily.

The protein localises to the cytoplasm. The enzyme catalyses N-terminal L-glutamyl-[protein] + L-leucyl-tRNA(Leu) = N-terminal L-leucyl-L-glutamyl-[protein] + tRNA(Leu) + H(+). It catalyses the reaction N-terminal L-aspartyl-[protein] + L-leucyl-tRNA(Leu) = N-terminal L-leucyl-L-aspartyl-[protein] + tRNA(Leu) + H(+). Functionally, functions in the N-end rule pathway of protein degradation where it conjugates Leu from its aminoacyl-tRNA to the N-termini of proteins containing an N-terminal aspartate or glutamate. The protein is Aspartate/glutamate leucyltransferase of Afipia carboxidovorans (strain ATCC 49405 / DSM 1227 / KCTC 32145 / OM5) (Oligotropha carboxidovorans).